A 475-amino-acid polypeptide reads, in one-letter code: Aspartyl/glutamyl-tRNA(Asn/Gln) amidotransferase subunit B (475 aa).

The protein belongs to the GatB/GatE family. GatB subfamily. As to quaternary structure, heterotrimer of A, B and C subunits.

The enzyme catalyses L-glutamyl-tRNA(Gln) + L-glutamine + ATP + H2O = L-glutaminyl-tRNA(Gln) + L-glutamate + ADP + phosphate + H(+). It catalyses the reaction L-aspartyl-tRNA(Asn) + L-glutamine + ATP + H2O = L-asparaginyl-tRNA(Asn) + L-glutamate + ADP + phosphate + 2 H(+). Allows the formation of correctly charged Asn-tRNA(Asn) or Gln-tRNA(Gln) through the transamidation of misacylated Asp-tRNA(Asn) or Glu-tRNA(Gln) in organisms which lack either or both of asparaginyl-tRNA or glutaminyl-tRNA synthetases. The reaction takes place in the presence of glutamine and ATP through an activated phospho-Asp-tRNA(Asn) or phospho-Glu-tRNA(Gln). This chain is Aspartyl/glutamyl-tRNA(Asn/Gln) amidotransferase subunit B, found in Staphylococcus epidermidis (strain ATCC 12228 / FDA PCI 1200).